The sequence spans 206 residues: Octanoyltransferase (206 aa).

Positions 30–206 (PETNDEIWLV…EFVTLLNNSI (177 aa)) constitute a BPL/LPL catalytic domain. Substrate is bound by residues 69-76 (RGGQVTYH), 137-139 (SLG), and 150-152 (GIA). The active-site Acyl-thioester intermediate is the Cys168.

The protein belongs to the LipB family.

It localises to the cytoplasm. The enzyme catalyses octanoyl-[ACP] + L-lysyl-[protein] = N(6)-octanoyl-L-lysyl-[protein] + holo-[ACP] + H(+). Its pathway is protein modification; protein lipoylation via endogenous pathway; protein N(6)-(lipoyl)lysine from octanoyl-[acyl-carrier-protein]: step 1/2. In terms of biological role, catalyzes the transfer of endogenously produced octanoic acid from octanoyl-acyl-carrier-protein onto the lipoyl domains of lipoate-dependent enzymes. Lipoyl-ACP can also act as a substrate although octanoyl-ACP is likely to be the physiological substrate. This chain is Octanoyltransferase, found in Francisella tularensis subsp. mediasiatica (strain FSC147).